Here is a 469-residue protein sequence, read N- to C-terminus: Light-independent protochlorophyllide reductase subunit N (469 aa).

[4Fe-4S] cluster contacts are provided by cysteine 24, cysteine 49, and cysteine 109.

The protein belongs to the BchN/ChlN family. In terms of assembly, protochlorophyllide reductase is composed of three subunits; ChlL, ChlN and ChlB. Forms a heterotetramer of two ChlB and two ChlN subunits. Requires [4Fe-4S] cluster as cofactor.

The enzyme catalyses chlorophyllide a + oxidized 2[4Fe-4S]-[ferredoxin] + 2 ADP + 2 phosphate = protochlorophyllide a + reduced 2[4Fe-4S]-[ferredoxin] + 2 ATP + 2 H2O. The protein operates within porphyrin-containing compound metabolism; chlorophyll biosynthesis (light-independent). In terms of biological role, component of the dark-operative protochlorophyllide reductase (DPOR) that uses Mg-ATP and reduced ferredoxin to reduce ring D of protochlorophyllide (Pchlide) to form chlorophyllide a (Chlide). This reaction is light-independent. The NB-protein (ChlN-ChlB) is the catalytic component of the complex. This is Light-independent protochlorophyllide reductase subunit N from Gloeobacter violaceus (strain ATCC 29082 / PCC 7421).